A 35-amino-acid chain; its full sequence is Photosystem II reaction center protein T (35 aa).

Residues 3 to 23 form a helical membrane-spanning segment; sequence ALVYTFLLISTLGIIFFAIFF.

It belongs to the PsbT family. PSII is composed of 1 copy each of membrane proteins PsbA, PsbB, PsbC, PsbD, PsbE, PsbF, PsbH, PsbI, PsbJ, PsbK, PsbL, PsbM, PsbT, PsbY, PsbZ, Psb30/Ycf12, at least 3 peripheral proteins of the oxygen-evolving complex and a large number of cofactors. It forms dimeric complexes.

It localises to the plastid. It is found in the chloroplast thylakoid membrane. In terms of biological role, found at the monomer-monomer interface of the photosystem II (PS II) dimer, plays a role in assembly and dimerization of PSII. PSII is a light-driven water plastoquinone oxidoreductase, using light energy to abstract electrons from H(2)O, generating a proton gradient subsequently used for ATP formation. The protein is Photosystem II reaction center protein T of Welwitschia mirabilis (Tree tumbo).